The chain runs to 51 residues: 2,3,4,5-tetrahydropyridine-2,6-dicarboxylate N-succinyltransferase (51 aa).

It belongs to the transferase hexapeptide repeat family. In terms of assembly, homotrimer.

Its subcellular location is the cytoplasm. The catalysed reaction is (S)-2,3,4,5-tetrahydrodipicolinate + succinyl-CoA + H2O = (S)-2-succinylamino-6-oxoheptanedioate + CoA. Its pathway is amino-acid biosynthesis; L-lysine biosynthesis via DAP pathway; LL-2,6-diaminopimelate from (S)-tetrahydrodipicolinate (succinylase route): step 1/3. This is 2,3,4,5-tetrahydropyridine-2,6-dicarboxylate N-succinyltransferase (dapD) from Klebsiella oxytoca.